A 614-amino-acid polypeptide reads, in one-letter code: Heat shock protein SSB1 (614 aa).

A nucleotide binding domain (NBD) region spans residues 1–392 (MSTEVYDGAI…ILSGKATSAE (392 aa)). ATP is bound by residues 16–18 (TTY), K74, 206–208 (GGT), 272–279 (ERAKRTLS), and G343. The tract at residues 393 to 403 (TADLLLLDVVP) is inter-domain linker. The interval 404 to 614 (LSLGVAMEGN…RAVTKAMSSR (211 aa)) is substrate binding domain (SBD). A lid domain (SBDalpha) region spans residues 517 to 613 (TSEIENMISE…KRAVTKAMSS (97 aa)). Positions 575–583 (IENTMSEAM) match the Nuclear export signal motif.

It belongs to the heat shock protein 70 family. Interacts with HAT1 in starvation conditions.

The protein resides in the nucleus. The protein localises to the cytoplasm. It carries out the reaction ATP + H2O = ADP + phosphate + H(+). In terms of biological role, chaperone that interacts with the histone acetyltransferase HAT1 and mediates its translocation from the nucleus to the cytoplasm during germination and starvation conditions. Within the cytoplasm, HAT1 regulates autophagy via acetylation of the autophagy-related proteins ATG3 and ATG9. This is Heat shock protein SSB1 from Pyricularia oryzae (strain 70-15 / ATCC MYA-4617 / FGSC 8958) (Rice blast fungus).